The following is a 250-amino-acid chain: DNA repair protein RecO (250 aa).

Belongs to the RecO family.

Functionally, involved in DNA repair and RecF pathway recombination. The protein is DNA repair protein RecO of Thermodesulfovibrio yellowstonii (strain ATCC 51303 / DSM 11347 / YP87).